Here is a 588-residue protein sequence, read N- to C-terminus: 2-succinyl-5-enolpyruvyl-6-hydroxy-3-cyclohexene-1-carboxylate synthase (588 aa).

Belongs to the TPP enzyme family. MenD subfamily. As to quaternary structure, homodimer. Mg(2+) is required as a cofactor. It depends on Mn(2+) as a cofactor. Requires thiamine diphosphate as cofactor.

It catalyses the reaction isochorismate + 2-oxoglutarate + H(+) = 5-enolpyruvoyl-6-hydroxy-2-succinyl-cyclohex-3-ene-1-carboxylate + CO2. It participates in quinol/quinone metabolism; 1,4-dihydroxy-2-naphthoate biosynthesis; 1,4-dihydroxy-2-naphthoate from chorismate: step 2/7. The protein operates within cofactor biosynthesis; phylloquinone biosynthesis. Its function is as follows. Catalyzes the thiamine diphosphate-dependent decarboxylation of 2-oxoglutarate and the subsequent addition of the resulting succinic semialdehyde-thiamine pyrophosphate anion to isochorismate to yield 2-succinyl-5-enolpyruvyl-6-hydroxy-3-cyclohexene-1-carboxylate (SEPHCHC). This chain is 2-succinyl-5-enolpyruvyl-6-hydroxy-3-cyclohexene-1-carboxylate synthase, found in Prochlorococcus marinus (strain MIT 9515).